The primary structure comprises 161 residues: Globin CTT-VIIB-6 (161 aa).

Residues 1–16 (MKFFAVLALCIVGAIA) form the signal peptide. Residues 18–161 (PLTADEASLV…NTFAIVVPRL (144 aa)) form the Globin domain. Residues His-76 and His-111 each coordinate heme b.

It belongs to the globin family. As to quaternary structure, homodimer.

The protein is Globin CTT-VIIB-6 (CTT-7B6) of Chironomus thummi thummi (Midge).